The chain runs to 528 residues: Purine-cytosine permease FCY21 (528 aa).

Over 1-90 (MPQTHEMSLN…DDSILNAASM (90 aa)) the chain is Cytoplasmic. Phosphoserine is present on Ser43. Thr46 bears the Phosphothreonine mark. A helical membrane pass occupies residues 91-111 (WFSANMVLPAYAIGALGPMVF). Topologically, residues 112–118 (DLNFGQS) are extracellular. The chain crosses the membrane as a helical span at residues 119–139 (VFVIIFFNLLGLVSVAFFSVF). At 140–161 (GAELGLRQMILSRYLVGNIAAR) the chain is on the cytoplasmic side. A helical transmembrane segment spans residues 162 to 182 (IFSFINFIACIGWGIVNTVAS). At 183–198 (SQVLNMVNPGHQCPLW) the chain is on the extracellular side. The chain crosses the membrane as a helical span at residues 199 to 219 (AGCIVIIGATVIVTFFGYGVI). The Cytoplasmic portion of the chain corresponds to 220–221 (HA). A helical transmembrane segment spans residues 222–242 (YEKWAWVPNFAVFLVIIARLA). At 243-260 (RSKKFVLGEWTSGPTTAG) the chain is on the extracellular side. The helical transmembrane segment at 261–281 (NVLSFGSTVYGFAAGWTTYAA) threads the bilayer. Residues 282-295 (DYTVYMPRKTNKYK) are Cytoplasmic-facing. Residues 296 to 316 (IFFSLVVGLATPLYFTMILGA) form a helical membrane-spanning segment. At 317 to 340 (AVAMAAIGDPAWKTYYDENSIGGL) the chain is on the extracellular side. The chain crosses the membrane as a helical span at residues 341–361 (TFAVLVPNSVHGFGQFCCVLL). Over 362 to 393 (SLSTIANNVPNMYTIALSVQATWEPLAKVPRV) the chain is Cytoplasmic. Residues 394–414 (IWTLLGNAAALGIAIPACYYF) traverse the membrane as a helical segment. Topologically, residues 415 to 416 (ST) are extracellular. Residues 417–437 (FMNYFMDSIGYYLAIYIAIAC) traverse the membrane as a helical segment. Over 438–460 (SEHFIYRRSFSAYNVDDWDSWER) the chain is Cytoplasmic. Residues 461–481 (LPIGIAGTAALIVGAFGVALG) traverse the membrane as a helical segment. The Extracellular segment spans residues 482 to 493 (MCQTYWVGEISR). The helical transmembrane segment at 494–514 (LIGDYGGDIGFELGLSWAFIV) threads the bilayer. Over 515–528 (YNIARPFELKYFGR) the chain is Cytoplasmic.

This sequence belongs to the purine-cytosine permease (2.A.39) family.

The protein resides in the membrane. In terms of biological role, probable purine-cytosine permease. In Saccharomyces cerevisiae (strain ATCC 204508 / S288c) (Baker's yeast), this protein is Purine-cytosine permease FCY21 (FCY21).